The primary structure comprises 89 residues: Small ribosomal subunit protein uS15 (89 aa).

The protein belongs to the universal ribosomal protein uS15 family. In terms of assembly, part of the 30S ribosomal subunit. Forms a bridge to the 50S subunit in the 70S ribosome, contacting the 23S rRNA.

Functionally, one of the primary rRNA binding proteins, it binds directly to 16S rRNA where it helps nucleate assembly of the platform of the 30S subunit by binding and bridging several RNA helices of the 16S rRNA. Forms an intersubunit bridge (bridge B4) with the 23S rRNA of the 50S subunit in the ribosome. The polypeptide is Small ribosomal subunit protein uS15 (Cereibacter sphaeroides (strain ATCC 17023 / DSM 158 / JCM 6121 / CCUG 31486 / LMG 2827 / NBRC 12203 / NCIMB 8253 / ATH 2.4.1.) (Rhodobacter sphaeroides)).